A 257-amino-acid polypeptide reads, in one-letter code: Acetyl-coenzyme A carboxylase carboxyl transferase subunit beta (257 aa).

Positions 5 to 257 constitute a CoA carboxyltransferase N-terminal domain; that stretch reads VFTKCERCKQ…DLERLLGFVG (253 aa). Zn(2+)-binding residues include Cys9, Cys12, Cys28, and Cys31. Residues 9–31 form a C4-type zinc finger; it reads CERCKQPVYEKDLRARFNVCPNC.

Belongs to the AccD/PCCB family. Acetyl-CoA carboxylase is a heterohexamer composed of biotin carboxyl carrier protein (AccB), biotin carboxylase (AccC) and two subunits each of ACCase subunit alpha (AccA) and ACCase subunit beta (AccD). Zn(2+) is required as a cofactor.

The protein localises to the cytoplasm. It carries out the reaction N(6)-carboxybiotinyl-L-lysyl-[protein] + acetyl-CoA = N(6)-biotinyl-L-lysyl-[protein] + malonyl-CoA. It participates in lipid metabolism; malonyl-CoA biosynthesis; malonyl-CoA from acetyl-CoA: step 1/1. Functionally, component of the acetyl coenzyme A carboxylase (ACC) complex. Biotin carboxylase (BC) catalyzes the carboxylation of biotin on its carrier protein (BCCP) and then the CO(2) group is transferred by the transcarboxylase to acetyl-CoA to form malonyl-CoA. The polypeptide is Acetyl-coenzyme A carboxylase carboxyl transferase subunit beta (Rubrobacter xylanophilus (strain DSM 9941 / JCM 11954 / NBRC 16129 / PRD-1)).